Consider the following 145-residue polypeptide: uncharacterized protein (145 aa).

The interval 1 to 59 (MSTGTPHYAADRSKSRKSNNNRSIPFRTPTTQKVVKTSIRLGPVNPPTPTRNTQGGHGF) is disordered.

This is an uncharacterized protein from Caenorhabditis elegans.